The following is a 541-amino-acid chain: Putative acyl-CoA dehydrogenase AidB (541 aa).

FAD contacts are provided by residues Met182–Ser191, Thr185, Ser191, Phe216–Ser218, Ser218, Ile423–Leu433, and Asn429. Positions Val445 to Val541 are dsDNA-binding.

This sequence belongs to the acyl-CoA dehydrogenase family. Homotetramer. Dimer of dimers. FAD is required as a cofactor.

Its subcellular location is the cytoplasm. Functionally, part of the adaptive DNA-repair response to alkylating agents. Could prevent alkylation damage by protecting DNA and destroying alkylating agents that have yet to reach their DNA target. Binds to double-stranded DNA with a preference for a DNA region that includes its own promoter. Shows weak isovaleryl-CoA dehydrogenase activity in vitro. The sequence is that of Putative acyl-CoA dehydrogenase AidB (aidB) from Escherichia coli (strain K12).